A 341-amino-acid chain; its full sequence is Phosphoribosylformylglycinamidine cyclo-ligase (341 aa).

This sequence belongs to the AIR synthase family.

The protein localises to the cytoplasm. The enzyme catalyses 2-formamido-N(1)-(5-O-phospho-beta-D-ribosyl)acetamidine + ATP = 5-amino-1-(5-phospho-beta-D-ribosyl)imidazole + ADP + phosphate + H(+). It participates in purine metabolism; IMP biosynthesis via de novo pathway; 5-amino-1-(5-phospho-D-ribosyl)imidazole from N(2)-formyl-N(1)-(5-phospho-D-ribosyl)glycinamide: step 2/2. The protein is Phosphoribosylformylglycinamidine cyclo-ligase of Thermosynechococcus vestitus (strain NIES-2133 / IAM M-273 / BP-1).